The sequence spans 155 residues: Leader peptidase HopD (155 aa).

Belongs to the peptidase A24 family.

In Salmonella typhimurium (strain LT2 / SGSC1412 / ATCC 700720), this protein is Leader peptidase HopD (hopD).